The chain runs to 622 residues: Arginine--tRNA ligase (622 aa).

Positions 127-137 match the 'HIGH' region motif; that stretch reads ANPVHPLHVGH.

The protein belongs to the class-I aminoacyl-tRNA synthetase family.

It localises to the cytoplasm. The enzyme catalyses tRNA(Arg) + L-arginine + ATP = L-arginyl-tRNA(Arg) + AMP + diphosphate. This is Arginine--tRNA ligase from Ignicoccus hospitalis (strain KIN4/I / DSM 18386 / JCM 14125).